The sequence spans 429 residues: Asparagine--tRNA ligase (429 aa).

It belongs to the class-II aminoacyl-tRNA synthetase family. Homodimer.

It localises to the cytoplasm. The enzyme catalyses tRNA(Asn) + L-asparagine + ATP = L-asparaginyl-tRNA(Asn) + AMP + diphosphate + H(+). This is Asparagine--tRNA ligase from Desulforamulus reducens (strain ATCC BAA-1160 / DSM 100696 / MI-1) (Desulfotomaculum reducens).